A 97-amino-acid chain; its full sequence is Protein RADIALIS-like 6 (97 aa).

An SANT domain is found at 7–59; that stretch reads SSISPWTFSQNKMFERALAVYDKDTPDRWHNVAKAVGGKTVEEVKRHYDILVE.

In terms of tissue distribution, expressed in the micropylar endosperm surrounding globular-stage embryos but no expression was detected elsewhere, including floral tissues.

It is found in the nucleus. Its function is as follows. Probable transcription factor. The protein is Protein RADIALIS-like 6 (RL6) of Arabidopsis thaliana (Mouse-ear cress).